The primary structure comprises 509 residues: Type II methyltransferase M.BsoBI (509 aa).

The protein belongs to the N(4)/N(6)-methyltransferase family. N(4) subfamily.

The catalysed reaction is a 2'-deoxycytidine in DNA + S-adenosyl-L-methionine = an N(4)-methyl-2'-deoxycytidine in DNA + S-adenosyl-L-homocysteine + H(+). An alpha subtype methylase that recognizes the double-stranded sequence 5'-CYCGRG-3', methylates C-1 on both strands, and protects the DNA from cleavage by the BsoBI endonuclease. This is Type II methyltransferase M.BsoBI from Geobacillus stearothermophilus (Bacillus stearothermophilus).